The following is a 520-amino-acid chain: Cilia- and flagella-associated protein 157 (520 aa).

Positions 1–22 are disordered; the sequence is MAPKKSVSKAGKELEVKKKGGK. Basic and acidic residues predominate over residues 10-22; the sequence is AGKELEVKKKGGK. Coiled-coil stretches lie at residues 33–189 and 236–372; these read LAKE…LEKK and LQMA…QATS. The segment at 416–453 is disordered; sequence PQKAACPHQESQSHGPPKESRPSIQLPRTGSLLPQLSD. A compositionally biased stretch (polar residues) spans 437–453; the sequence is PSIQLPRTGSLLPQLSD.

The protein belongs to the CFAP157 family. Interacts with TUBB and TUBA4A. Interacts with CEP350.

The protein localises to the cytoplasm. It localises to the cytoskeleton. The protein resides in the cilium basal body. Functionally, specifically required during spermatogenesis for flagellum morphogenesis and sperm motility. May be required to suppress the formation of supernumerary axonemes and ensure a correct ultrastructure. This is Cilia- and flagella-associated protein 157 from Homo sapiens (Human).